We begin with the raw amino-acid sequence, 740 residues long: Phosphoribosylformylglycinamidine synthase subunit PurL (740 aa).

The active site involves H53. Residues Y56 and K95 each contribute to the ATP site. Mg(2+) is bound at residue E97. Substrate contacts are provided by residues 98–101 and R120; that span reads SHNH. H99 (proton acceptor) is an active-site residue. D121 is a binding site for Mg(2+). Residue Q244 coordinates substrate. Mg(2+) is bound at residue D272. 316 to 318 contacts substrate; the sequence is ESQ. D497 and G534 together coordinate ATP. N535 contributes to the Mg(2+) binding site. A substrate-binding site is contributed by S537.

It belongs to the FGAMS family. Monomer. Part of the FGAM synthase complex composed of 1 PurL, 1 PurQ and 2 PurS subunits.

It is found in the cytoplasm. It carries out the reaction N(2)-formyl-N(1)-(5-phospho-beta-D-ribosyl)glycinamide + L-glutamine + ATP + H2O = 2-formamido-N(1)-(5-O-phospho-beta-D-ribosyl)acetamidine + L-glutamate + ADP + phosphate + H(+). It participates in purine metabolism; IMP biosynthesis via de novo pathway; 5-amino-1-(5-phospho-D-ribosyl)imidazole from N(2)-formyl-N(1)-(5-phospho-D-ribosyl)glycinamide: step 1/2. Part of the phosphoribosylformylglycinamidine synthase complex involved in the purines biosynthetic pathway. Catalyzes the ATP-dependent conversion of formylglycinamide ribonucleotide (FGAR) and glutamine to yield formylglycinamidine ribonucleotide (FGAM) and glutamate. The FGAM synthase complex is composed of three subunits. PurQ produces an ammonia molecule by converting glutamine to glutamate. PurL transfers the ammonia molecule to FGAR to form FGAM in an ATP-dependent manner. PurS interacts with PurQ and PurL and is thought to assist in the transfer of the ammonia molecule from PurQ to PurL. This Rhodospirillum rubrum (strain ATCC 11170 / ATH 1.1.1 / DSM 467 / LMG 4362 / NCIMB 8255 / S1) protein is Phosphoribosylformylglycinamidine synthase subunit PurL.